The sequence spans 502 residues: Probable malate:quinone oxidoreductase (502 aa).

Belongs to the MQO family. FAD serves as cofactor.

It catalyses the reaction (S)-malate + a quinone = a quinol + oxaloacetate. Its pathway is carbohydrate metabolism; tricarboxylic acid cycle; oxaloacetate from (S)-malate (quinone route): step 1/1. This chain is Probable malate:quinone oxidoreductase, found in Synechococcus sp. (strain CC9902).